A 599-amino-acid chain; its full sequence is Sulfite reductase [NADPH] flavoprotein alpha-component (599 aa).

The Flavodoxin-like domain occupies 64–202 (ITIISASQTG…AASEWRARVV (139 aa)). FMN contacts are provided by residues 70–75 (SQTGNA), 117–120 (STQG), and 153–162 (LGDSSYEFFC). The region spanning 234–448 (DAPLVASLSV…IEHNDNFRLP (215 aa)) is the FAD-binding FR-type domain. FAD contacts are provided by residues threonine 322, alanine 356, 386-389 (RLYS), 404-406 (TVG), tyrosine 410, and 419-422 (GGAS). Residues 519 to 520 (SR), 525 to 529 (KVYVQ), and aspartate 561 contribute to the NADP(+) site. Tyrosine 599 lines the FAD pocket.

The protein belongs to the NADPH-dependent sulphite reductase flavoprotein subunit CysJ family. In the N-terminal section; belongs to the flavodoxin family. It in the C-terminal section; belongs to the flavoprotein pyridine nucleotide cytochrome reductase family. In terms of assembly, alpha(8)-beta(8). The alpha component is a flavoprotein, the beta component is a hemoprotein. FAD is required as a cofactor. Requires FMN as cofactor.

It catalyses the reaction hydrogen sulfide + 3 NADP(+) + 3 H2O = sulfite + 3 NADPH + 4 H(+). It participates in sulfur metabolism; hydrogen sulfide biosynthesis; hydrogen sulfide from sulfite (NADPH route): step 1/1. In terms of biological role, component of the sulfite reductase complex that catalyzes the 6-electron reduction of sulfite to sulfide. This is one of several activities required for the biosynthesis of L-cysteine from sulfate. The flavoprotein component catalyzes the electron flow from NADPH -&gt; FAD -&gt; FMN to the hemoprotein component. The chain is Sulfite reductase [NADPH] flavoprotein alpha-component from Escherichia coli (strain ATCC 8739 / DSM 1576 / NBRC 3972 / NCIMB 8545 / WDCM 00012 / Crooks).